The chain runs to 93 residues: Protein FMP16, mitochondrial (93 aa).

The transit peptide at 1–25 directs the protein to the mitochondrion; the sequence is MLRTTFLRTPRQLMRKSPRASFSIV. The segment at 30–93 is disordered; it reads FPHLKNNQDE…EQNRPDDGVY (64 aa). Over residues 35 to 93 the composition is skewed to basic and acidic residues; it reads NNQDEAEKKEQGLFDSNKKRLDTLEHGKNPDYKQPGMEDLKKKGDDARIEQNRPDDGVY.

The protein localises to the mitochondrion. This is Protein FMP16, mitochondrial (FMP16) from Saccharomyces cerevisiae (strain ATCC 204508 / S288c) (Baker's yeast).